A 266-amino-acid chain; its full sequence is MICOS complex subunit MIC27 (266 aa).

The N-terminal 27 residues, 1–27 (MAAIRMGKLTTMPAGLIYASVSVHAAK), are a transit peptide targeting the mitochondrion. Residues 28–110 (EEESKKQLVK…YVYMKNPPRD (83 aa)) lie on the Mitochondrial intermembrane side of the membrane. Residues 111–129 (FLPKMGVITVSGLAGLVSA) traverse the membrane as a helical segment. Residues 130-137 (RKGSKFKK) lie on the Mitochondrial matrix side of the membrane. A helical transmembrane segment spans residues 138 to 155 (ITYPLGLATLGATVCYPV). Residues 156–266 (QSVIIAKVTA…NVTNSGVLRI (111 aa)) lie on the Mitochondrial intermembrane side of the membrane. Serine 204 bears the Phosphoserine mark.

This sequence belongs to the apolipoprotein O/MICOS complex subunit Mic27 family. Component of the mitochondrial contact site and cristae organizing system (MICOS) complex, composed of at least MICOS10/MIC10, CHCHD3/MIC19, CHCHD6/MIC25, APOOL/MIC27, IMMT/MIC60, APOO/MIC23/MIC26 and MICOS13/MIC13. This complex was also known under the names MINOS or MitOS complex. The MICOS complex associates with mitochondrial outer membrane proteins SAMM50, MTX1 and MTX2 (together described as components of the mitochondrial outer membrane sorting assembly machinery (SAM) complex) and DNAJC11, mitochondrial inner membrane protein TMEM11 and with HSPA9. The MICOS and SAM complexes together with DNAJC11 are part of a large protein complex spanning both membranes termed the mitochondrial intermembrane space bridging (MIB) complex. Interacts with MICOS10/MIC10, IMMT/MIC60 and APOO/MIC23/MIC26.

The protein localises to the mitochondrion inner membrane. The protein resides in the mitochondrion. Component of the MICOS complex, a large protein complex of the mitochondrial inner membrane that plays crucial roles in the maintenance of crista junctions, inner membrane architecture, and formation of contact sites to the outer membrane. Specifically binds to cardiolipin (in vitro) but not to the precursor lipid phosphatidylglycerol. Plays a crucial role in crista junction formation and mitochondrial function. The protein is MICOS complex subunit MIC27 (APOOL) of Pongo abelii (Sumatran orangutan).